The sequence spans 148 residues: Transcription antitermination protein NusB (148 aa).

The protein belongs to the NusB family.

Involved in transcription antitermination. Required for transcription of ribosomal RNA (rRNA) genes. Binds specifically to the boxA antiterminator sequence of the ribosomal RNA (rrn) operons. The polypeptide is Transcription antitermination protein NusB (Novosphingobium aromaticivorans (strain ATCC 700278 / DSM 12444 / CCUG 56034 / CIP 105152 / NBRC 16084 / F199)).